The chain runs to 531 residues: Flavin-containing monooxygenase 3 (531 aa).

FAD contacts are provided by residues 9 to 13 (GAGIS), E32, 40 to 41 (LW), and 61 to 62 (NS). Residues 60–61 (TN) and 195–198 (SGCD) contribute to the NADP(+) site. A helical membrane pass occupies residues 511–531 (FSPWLKLLAIAVLLIAAVLVF).

The protein belongs to the FMO family. Requires FAD as cofactor. As to expression, liver.

It is found in the microsome membrane. The protein resides in the endoplasmic reticulum membrane. The catalysed reaction is trimethylamine + NADPH + O2 = trimethylamine N-oxide + NADP(+) + H2O. It catalyses the reaction N,N-dimethylaniline + NADPH + O2 + H(+) = N,N-dimethylaniline N-oxide + NADP(+) + H2O. The enzyme catalyses hypotaurine + NADPH + O2 + H(+) = taurine + NADP(+) + H2O. It carries out the reaction (S)-nicotine + NADPH + O2 = trans-(S)-nicotine N(1')-oxide + NADP(+) + H2O. The catalysed reaction is albendazole + NADPH + O2 + H(+) = albendazole S-oxide + NADP(+) + H2O. Essential hepatic enzyme that catalyzes the oxygenation of a wide variety of nitrogen- and sulfur-containing compounds including drugs as well as dietary compounds. Plays an important role in the metabolism of trimethylamine (TMA), via the production of trimethylamine N-oxide (TMAO) metabolite. TMA is generated by the action of gut microbiota using dietary precursors such as choline, choline containing compounds, betaine or L-carnitine. By regulating TMAO concentration, FMO3 directly impacts both platelet responsiveness and rate of thrombus formation. This is Flavin-containing monooxygenase 3 (FMO3) from Oryctolagus cuniculus (Rabbit).